Reading from the N-terminus, the 184-residue chain is Photosystem I assembly protein Ycf4 (184 aa).

The next 2 membrane-spanning stretches (helical) occupy residues 20–42 and 57–79; these read VNLC…GFSS and IAFI…LGLY.

Belongs to the Ycf4 family.

It localises to the plastid. It is found in the chloroplast thylakoid membrane. Seems to be required for the assembly of the photosystem I complex. The polypeptide is Photosystem I assembly protein Ycf4 (Adiantum capillus-veneris (Maidenhair fern)).